Here is a 723-residue protein sequence, read N- to C-terminus: Transient receptor potential cation channel subfamily V member 5 (723 aa).

The Cytoplasmic segment spans residues 1–320 (MGVKKPWIQL…SLKWKKYGQP (320 aa)). ANK repeat units lie at residues 72–101 (LGETALHVAALYDNLDAAIMLMETAPYLVT), 110–139 (VGQTALHIAIMNQNVNLVRALLARGASASA), 156–185 (YGEHPLSFAACVGSEEIVRLLIEHGADIRA), 189–222 (LGNTVLHILVLQPNKTFACQMYNLLLSHDGGDHL), and 232–261 (QGLTPFKLAGVEGNTVMFQHLMQKRKHIQW). The chain crosses the membrane as a helical span at residues 321–341 (YFCLLGMLYIFYMICFTTCCV). Over 342–378 (YRPLKFRDANRTHVRDNTVLEQKPLQEAYVTYQDKVR) the chain is Extracellular. The N-linked (GlcNAc...) asparagine glycan is linked to N351. Residues 379 to 401 (LVGELVTVIGAVVILLIEIPDIF) form a helical membrane-spanning segment. The Cytoplasmic segment spans residues 402–412 (RVGASRYFGHT). A helical membrane pass occupies residues 413–435 (VLGGPFHVIIITYASLVLLIMVM). At 436–441 (RLTSMN) the chain is on the extracellular side. The helical transmembrane segment at 442–462 (GEVVPISMALVLGWCSVMYFS) threads the bilayer. Topologically, residues 463 to 485 (RGFQMLGPFTIMIQKMIFGDLLR) are cytoplasmic. The chain crosses the membrane as a helical span at residues 486 to 506 (FCWLMAMVILGFASAFYIIFQ). An intramembrane region (pore-forming) is located at residues 517–537 (SDYPTAMFSTFELFLTIIDGP). D535 contributes to the Ca(2+) binding site. A helical membrane pass occupies residues 550 to 570 (LTYFAFAIIATLLMLNLFIAM). At 571–723 (MGDTHWRVAQ…EGDGEEIYHF (153 aa)) the chain is on the cytoplasmic side. An interaction with S100A10 region spans residues 591–595 (VATTV). Residues 643 to 646 (AFKS) are involved in Ca(2+)-dependent inactivation. Residues 651–674 (EVQEQLSEKQPSGTETGTLARGSV) form a disordered region. A compositionally biased stretch (polar residues) spans 654–667 (EQLSEKQPSGTETG). T678 carries the phosphothreonine modification. S682 carries the phosphoserine modification. Residues 693-723 (RGWEILRRNTLGHLNLGQDLGEGDGEEIYHF) form an involved in Ca(2+)-dependent inactivation region.

Belongs to the transient receptor (TC 1.A.4) family. TrpV subfamily. TRPV5 sub-subfamily. Homotetramer and probably heterotetramer with TRPV6. Interacts with TRPV6. Interacts with S100A10 and probably with the ANAX2-S100A10 heterotetramer. The interaction with S100A10 is required for the trafficking to the plasma membrane. Interacts with calmodulin. Interacts with BSPRY, which results in its inactivation. In terms of processing, glycosylated. As to expression, detected in kidney (at protein level). Detected in kidney.

Its subcellular location is the cell membrane. It is found in the apical cell membrane. The catalysed reaction is Ca(2+)(in) = Ca(2+)(out). Activated by WNK3. Functionally, constitutively active calcium selective cation channel thought to be involved in Ca(2+) reabsorption in kidney and intestine. Required for normal Ca(2+) reabsorption in the kidney distal convoluted tubules. The channel is activated by low internal calcium level and the current exhibits an inward rectification. A Ca(2+)-dependent feedback regulation includes fast channel inactivation and slow current decay. Heteromeric assembly with TRPV6 seems to modify channel properties. TRPV5-TRPV6 heteromultimeric concatemers exhibit voltage-dependent gating. The chain is Transient receptor potential cation channel subfamily V member 5 (Trpv5) from Rattus norvegicus (Rat).